The chain runs to 160 residues: Large ribosomal subunit protein uL16 (160 aa).

The interval 138–160 (KNLEAPSQEKTKNSKKSQEEVKQ) is disordered.

Belongs to the universal ribosomal protein uL16 family. Part of the 50S ribosomal subunit.

In terms of biological role, binds 23S rRNA and is also seen to make contacts with the A and possibly P site tRNAs. The protein is Large ribosomal subunit protein uL16 of Prochlorococcus marinus (strain MIT 9215).